The chain runs to 450 residues: tRNA modification GTPase MnmE (450 aa).

Residues R23, E79, and K118 each contribute to the (6S)-5-formyl-5,6,7,8-tetrahydrofolate site. The TrmE-type G domain maps to 214 to 374; it reads GITLILVGKP…LKDHILAKVG (161 aa). Residue N224 coordinates K(+). GTP contacts are provided by residues 224-229, 243-249, and 268-271; these read NAGKSS, TSIAGTT, and DTAG. Mg(2+) is bound at residue S228. T243, I245, and T248 together coordinate K(+). Residue T249 participates in Mg(2+) binding. Position 450 (K450) interacts with (6S)-5-formyl-5,6,7,8-tetrahydrofolate.

Belongs to the TRAFAC class TrmE-Era-EngA-EngB-Septin-like GTPase superfamily. TrmE GTPase family. In terms of assembly, homodimer. Heterotetramer of two MnmE and two MnmG subunits. K(+) serves as cofactor.

Its subcellular location is the cytoplasm. Its function is as follows. Exhibits a very high intrinsic GTPase hydrolysis rate. Involved in the addition of a carboxymethylaminomethyl (cmnm) group at the wobble position (U34) of certain tRNAs, forming tRNA-cmnm(5)s(2)U34. The protein is tRNA modification GTPase MnmE of Francisella philomiragia subsp. philomiragia (strain ATCC 25017 / CCUG 19701 / FSC 153 / O#319-036).